Here is a 247-residue protein sequence, read N- to C-terminus: 23S rRNA (guanosine-2'-O-)-methyltransferase RlmB (247 aa).

Residues G197, I217, and L226 each contribute to the S-adenosyl-L-methionine site.

It belongs to the class IV-like SAM-binding methyltransferase superfamily. RNA methyltransferase TrmH family. RlmB subfamily.

Its subcellular location is the cytoplasm. It carries out the reaction guanosine(2251) in 23S rRNA + S-adenosyl-L-methionine = 2'-O-methylguanosine(2251) in 23S rRNA + S-adenosyl-L-homocysteine + H(+). Its function is as follows. Specifically methylates the ribose of guanosine 2251 in 23S rRNA. The sequence is that of 23S rRNA (guanosine-2'-O-)-methyltransferase RlmB from Vibrio parahaemolyticus serotype O3:K6 (strain RIMD 2210633).